Consider the following 76-residue polypeptide: Serine palmitoyltransferase small subunit B (76 aa).

The Cytoplasmic segment spans residues 1 to 11; it reads MDFKRVKEYFA. Residues 12-29 traverse the membrane as a helical segment; sequence WLYYQYQIITCCAVMEPW. Residues 30 to 36 are Lumenal-facing; it reads EQSMLNT. A helical transmembrane segment spans residues 37–57; that stretch reads IILTIVAMVVYTAYVFIPIHI. The Cytoplasmic portion of the chain corresponds to 58–76; the sequence is RLAWEFFSKICGYDSSISN.

It belongs to the SPTSS family. SPTSSB subfamily. In terms of assembly, component of the serine palmitoyltransferase (SPT) complex, which is composed of SPTLC1, SPTLC2 or SPTLC3 and SPTSSA or SPTSSB. The heterodimer consisting of SPTLC1 and SPTLC2/SPTLC3 forms the catalytic core of the enzyme, while SPTSSA or SPTSSB subunits determine substrate specificity. SPT also interacts with ORMDL proteins, especially ORMDL3, which negatively regulate SPT activity in the presence of ceramides. Expression is strong in hypogonadal (hpg) mouse prostate, weak in mature castrated mouse prostate and absent in normal intact or androgen-replaced hpg mouse prostates.

It is found in the endoplasmic reticulum membrane. Its pathway is lipid metabolism; sphingolipid metabolism. Component of the serine palmitoyltransferase multisubunit enzyme (SPT) that catalyzes the initial and rate-limiting step in sphingolipid biosynthesis by condensing L-serine and activated acyl-CoA (most commonly palmitoyl-CoA) to form long-chain bases. The SPT complex is composed of SPTLC1, SPTLC2 or SPTLC3 and SPTSSA or SPTSSB. Within this complex, the heterodimer consisting of SPTLC1 and SPTLC2/SPTLC3 forms the catalytic core. Within the SPT complex, SPTSSB stimulates the catalytic activity and plays a role in substrate specificity. SPT complexes with this subunit showing a preference for longer acyl-CoAs. The SPTLC1-SPTLC2-SPTSSB complex shows a strong preference for C18-CoA substrate, while the SPTLC1-SPTLC3-SPTSSB isozyme displays an ability to use a broader range of acyl-CoAs, without apparent preference. The chain is Serine palmitoyltransferase small subunit B (Sptssb) from Mus musculus (Mouse).